Here is an 877-residue protein sequence, read N- to C-terminus: Clumping factor B (877 aa).

Residues 1–44 (MKKRIDYLSNKQNKYSIRRFTVGTTSVIVGATILFGIGNHQAQA) form the signal peptide. The YSIRK-G/S signaling motif signature appears at 15–26 (YSIRRFTVGTTS). Composition is skewed to polar residues over residues 44 to 61 (ASEQ…NASA) and 68 to 95 (MIET…NVDS). The tract at residues 44-192 (ASEQSNDTTQ…QGTSKPSVRT (149 aa)) is disordered. The segment at 45 to 542 (SEQSNDTTQS…GSADGDSAVN (498 aa)) is ligand binding A region. The span at 96–119 (TTKPMSTQTSNTTTTEPASTNETP) shows a compositional bias: low complexity. A compositionally biased stretch (polar residues) spans 120–189 (QPTAIKNQAT…SNAQGTSKPS (70 aa)). The MIDAS-like motif motif lies at 272–276 (DYSNS). Residues 530 to 849 (YGGGSADGDS…ETGDKSENTN (320 aa)) are disordered. Over residues 545–555 (DPTPGPPVDPE) the composition is skewed to pro residues. Residues 556 to 801 (PSPDPEPEPT…SDSDSDSDSD (246 aa)) are compositionally biased toward acidic residues. Polar residues predominate over residues 805–816 (RVTPPNNEQKAP). A compositionally biased stretch (basic and acidic residues) spans 833 to 846 (HKTDALPETGDKSE). The short motif at 838-842 (LPETG) is the LPXTG sorting signal element. The residue at position 841 (Thr-841) is a Pentaglycyl murein peptidoglycan amidated threonine. Positions 842-877 (GDKSENTNATLFGAMMALLGSLLLFRKRKQDHKEKA) are cleaved as a propeptide — removed by sortase.

The protein belongs to the serine-aspartate repeat-containing protein (SDr) family. In terms of processing, proteolytically cleaved by aureolysin (aur). This cleavage leads to the inactivation of ClfB.

It is found in the secreted. Its subcellular location is the cell wall. Cell surface-associated protein implicated in virulence by promoting bacterial attachment to both alpha- and beta-chains of human fibrinogen and inducing the formation of bacterial clumps. This chain is Clumping factor B (clfB), found in Staphylococcus aureus (strain Mu50 / ATCC 700699).